Reading from the N-terminus, the 477-residue chain is Ribulose bisphosphate carboxylase large chain (477 aa).

Residues 1–2 constitute a propeptide that is removed on maturation; the sequence is MS. Pro-3 bears the N-acetylproline mark. Lys-14 carries the post-translational modification N6,N6,N6-trimethyllysine. Substrate contacts are provided by Asn-123 and Thr-173. The active-site Proton acceptor is Lys-175. Lys-177 is a substrate binding site. 3 residues coordinate Mg(2+): Lys-201, Asp-203, and Glu-204. At Lys-201 the chain carries N6-carboxylysine. His-294 functions as the Proton acceptor in the catalytic mechanism. Residues Arg-295, His-327, and Ser-379 each contribute to the substrate site.

It belongs to the RuBisCO large chain family. Type I subfamily. In terms of assembly, heterohexadecamer of 8 large chains and 8 small chains; disulfide-linked. The disulfide link is formed within the large subunit homodimers. Requires Mg(2+) as cofactor. Post-translationally, the disulfide bond which can form in the large chain dimeric partners within the hexadecamer appears to be associated with oxidative stress and protein turnover.

It localises to the plastid. The protein localises to the chloroplast. The enzyme catalyses 2 (2R)-3-phosphoglycerate + 2 H(+) = D-ribulose 1,5-bisphosphate + CO2 + H2O. It catalyses the reaction D-ribulose 1,5-bisphosphate + O2 = 2-phosphoglycolate + (2R)-3-phosphoglycerate + 2 H(+). RuBisCO catalyzes two reactions: the carboxylation of D-ribulose 1,5-bisphosphate, the primary event in carbon dioxide fixation, as well as the oxidative fragmentation of the pentose substrate in the photorespiration process. Both reactions occur simultaneously and in competition at the same active site. The protein is Ribulose bisphosphate carboxylase large chain of Persea americana (Avocado).